Here is a 348-residue protein sequence, read N- to C-terminus: 4-hydroxy-2-oxovalerate aldolase 1 (348 aa).

The Pyruvate carboxyltransferase domain occupies 8–260; sequence ITVHDMTLRD…QTGVDVWAIQ (253 aa). Position 16–17 (16–17) interacts with substrate; it reads RD. A Mn(2+)-binding site is contributed by D17. Catalysis depends on H20, which acts as the Proton acceptor. Residues S170 and H199 each contribute to the substrate site. Mn(2+) is bound by residues H199 and H201. Position 290 (Y290) interacts with substrate.

It belongs to the 4-hydroxy-2-oxovalerate aldolase family.

It catalyses the reaction (S)-4-hydroxy-2-oxopentanoate = acetaldehyde + pyruvate. The polypeptide is 4-hydroxy-2-oxovalerate aldolase 1 (Cupriavidus metallidurans (strain ATCC 43123 / DSM 2839 / NBRC 102507 / CH34) (Ralstonia metallidurans)).